Here is a 421-residue protein sequence, read N- to C-terminus: Exopolysaccharide production protein ExoF (421 aa).

Positions 1–31 are cleaved as a signal peptide; it reads MQSNRRSGKSAGSRMVSCFTRLALLAALAAS.

It is found in the periplasm. The protein operates within glycan metabolism; exopolysaccharide biosynthesis. Functionally, involved in succinoglycan (EPS I) synthesis. Needed for the addition of the first sugar (galactose) to the isoprenoid carrier. The chain is Exopolysaccharide production protein ExoF (exoF) from Rhizobium meliloti (strain 1021) (Ensifer meliloti).